The chain runs to 181 residues: Lipoprotein signal peptidase (181 aa).

3 helical membrane-spanning segments follow: residues 25-45 (LFYK…QVFI), 86-106 (LVYF…VFMV), and 107-127 (KYSY…NFFD). Catalysis depends on residues Asp-138 and Asp-153. The chain crosses the membrane as a helical span at residues 149-169 (FNFADCCITFGFIGLFFCFLI).

It belongs to the peptidase A8 family.

It localises to the cell membrane. It catalyses the reaction Release of signal peptides from bacterial membrane prolipoproteins. Hydrolyzes -Xaa-Yaa-Zaa-|-(S,diacylglyceryl)Cys-, in which Xaa is hydrophobic (preferably Leu), and Yaa (Ala or Ser) and Zaa (Gly or Ala) have small, neutral side chains.. The protein operates within protein modification; lipoprotein biosynthesis (signal peptide cleavage). In terms of biological role, this protein specifically catalyzes the removal of signal peptides from prolipoproteins. This Mycoplasma genitalium (strain ATCC 33530 / DSM 19775 / NCTC 10195 / G37) (Mycoplasmoides genitalium) protein is Lipoprotein signal peptidase.